Reading from the N-terminus, the 228-residue chain is Death domain-containing membrane protein NRADD (228 aa).

Over 1–52 the chain is Extracellular; sequence MLYNVSKGVVYSDTALQGQDGDREGMWVGAGGALAPNTSSLFPPEPPGASSN. Residues N4 and N37 are each glycosylated (N-linked (GlcNAc...) asparagine). The helical; Signal-anchor for type III membrane protein transmembrane segment at 53–73 threads the bilayer; sequence IIPVYCALLATVILGLLAYVA. The Cytoplasmic portion of the chain corresponds to 74 to 228; sequence FKCWRSHKQR…SSPAESSSVV (155 aa). Positions 87–122 are disordered; sequence AKARTVELGDPDRDQRRGDSNVFVDSPPSLEPCIPS. The segment covering 90–105 has biased composition (basic and acidic residues); sequence RTVELGDPDRDQRRGD. The 80-residue stretch at 143–222 folds into the Death domain; it reads EEVQRLLMMG…DVVQVLSSPA (80 aa).

Interacts with NGFR. Interacts with NTRK1. Interacts with SORT1. Detected in lung and testis.

It is found in the cell membrane. It localises to the nucleus. Its function is as follows. Modulates NTRK1 signaling. Can activate several intracellular signaling pathways, leading to activation of JUN. Promotes apoptosis. Promotes translocation of SORT1 to the cell membrane, and thereby hinders lysosomal degradation of SOTR1 and promotes its interaction with NGFR. The chain is Death domain-containing membrane protein NRADD (Nradd) from Mus musculus (Mouse).